Consider the following 343-residue polypeptide: Zinc finger protein Gfi-1b (343 aa).

The mediates repression of transcription stretch occupies residues 1–20 (MPRSFLVKSKKTHTYNQHRY). The SNAG domain stretch occupies residues 1–20 (MPRSFLVKSKKTHTYNQHRY). Positions 51–77 (STDPTEKQHTPENVITEEARSDPGDPR) are disordered. A compositionally biased stretch (basic and acidic residues) spans 67–77 (EEARSDPGDPR). 6 consecutive C2H2-type zinc fingers follow at residues 176–199 (YHCV…RRSH), 205–227 (FVCN…LNVH), 233–255 (FECK…LLIH), 261–283 (YPCQ…TYIH), 289–311 (HKCQ…SRKH), and 317–340 (FSCD…ENQH).

The protein resides in the nucleus. Functionally, essential transcriptional regulator necessary for development and differentiation of erythroid and megakaryocytic lineages. Alters histone methylation by recruiting histone methyltransferase to target genes promoters. Plays a role in heterochromatin formation. The sequence is that of Zinc finger protein Gfi-1b (gfi1b) from Xenopus laevis (African clawed frog).